We begin with the raw amino-acid sequence, 129 residues long: MTKVIHTDNAPAAIGPYVQAVDLGNMLLTSGQIPVNPKTGEVPADIVAQARQSLENVKAIVEQAGLQVANIVKTTVFVKDLNDFAAVNAEYERFFKENNHPSFPARSCVEVARLPKDVGIEIEAIAVKA.

Belongs to the RutC family.

The sequence is that of RutC family protein PM1466 from Pasteurella multocida (strain Pm70).